The following is a 393-amino-acid chain: Putative F-box protein At1g55070 (393 aa).

The F-box domain maps to 29–74 (GEYFDRIPADLVIKILSKLSAKSMAKCRCVCKLLSSIIRQPNYNQL).

The sequence is that of Putative F-box protein At1g55070 from Arabidopsis thaliana (Mouse-ear cress).